A 378-amino-acid polypeptide reads, in one-letter code: Cobalt-precorrin-5B C(1)-methyltransferase (378 aa).

Belongs to the CbiD family.

The catalysed reaction is Co-precorrin-5B + S-adenosyl-L-methionine = Co-precorrin-6A + S-adenosyl-L-homocysteine. The protein operates within cofactor biosynthesis; adenosylcobalamin biosynthesis; cob(II)yrinate a,c-diamide from sirohydrochlorin (anaerobic route): step 6/10. Its function is as follows. Catalyzes the methylation of C-1 in cobalt-precorrin-5B to form cobalt-precorrin-6A. The protein is Cobalt-precorrin-5B C(1)-methyltransferase of Methanococcus aeolicus (strain ATCC BAA-1280 / DSM 17508 / OCM 812 / Nankai-3).